Consider the following 372-residue polypeptide: Lipoyl synthase, mitochondrial (372 aa).

[4Fe-4S] cluster-binding residues include cysteine 106, cysteine 111, cysteine 117, cysteine 137, cysteine 141, cysteine 144, and serine 352. Residues 122 to 341 form the Radical SAM core domain; that stretch reads EYGTATATIM…EKAGNELGFL (220 aa).

The protein belongs to the radical SAM superfamily. Lipoyl synthase family. [4Fe-4S] cluster is required as a cofactor.

It localises to the mitochondrion. The enzyme catalyses [[Fe-S] cluster scaffold protein carrying a second [4Fe-4S](2+) cluster] + N(6)-octanoyl-L-lysyl-[protein] + 2 oxidized [2Fe-2S]-[ferredoxin] + 2 S-adenosyl-L-methionine + 4 H(+) = [[Fe-S] cluster scaffold protein] + N(6)-[(R)-dihydrolipoyl]-L-lysyl-[protein] + 4 Fe(3+) + 2 hydrogen sulfide + 2 5'-deoxyadenosine + 2 L-methionine + 2 reduced [2Fe-2S]-[ferredoxin]. It participates in protein modification; protein lipoylation via endogenous pathway; protein N(6)-(lipoyl)lysine from octanoyl-[acyl-carrier-protein]: step 2/2. Its function is as follows. Catalyzes the radical-mediated insertion of two sulfur atoms into the C-6 and C-8 positions of the octanoyl moiety bound to the lipoyl domains of lipoate-dependent enzymes, thereby converting the octanoylated domains into lipoylated derivatives. This chain is Lipoyl synthase, mitochondrial (lias), found in Xenopus laevis (African clawed frog).